Here is a 458-residue protein sequence, read N- to C-terminus: Cytoplasmic tRNA 2-thiolation protein 2 (458 aa).

Belongs to the CTU2/NCS2 family.

Its subcellular location is the cytoplasm. The protein operates within tRNA modification; 5-methoxycarbonylmethyl-2-thiouridine-tRNA biosynthesis. Functionally, plays a central role in 2-thiolation of mcm(5)S(2)U at tRNA wobble positions of tRNA(Lys), tRNA(Glu) and tRNA(Gln). May act by forming a heterodimer with NCS6/CTU1 that ligates sulfur from thiocarboxylated URM1 onto the uridine of tRNAs at wobble position. The sequence is that of Cytoplasmic tRNA 2-thiolation protein 2 from Arabidopsis thaliana (Mouse-ear cress).